Here is a 410-residue protein sequence, read N- to C-terminus: Metacaspase-1B (410 aa).

The interval 1–106 is disordered; sequence MYHRNSAPPP…SFGKGAPSNY (106 aa). Pro residues-rich tracts occupy residues 7–23 and 32–52; these read APPP…PQSQ and PPYP…PPPT. Catalysis depends on residues H201 and C257.

Belongs to the peptidase C14B family.

Its function is as follows. Involved in cell death (apoptosis). The polypeptide is Metacaspase-1B (casB) (Aspergillus clavatus (strain ATCC 1007 / CBS 513.65 / DSM 816 / NCTC 3887 / NRRL 1 / QM 1276 / 107)).